The chain runs to 766 residues: MLSNRAFGETIEDYEVQHLLGKGGFAIVYKARCLHTHQDVAIKMIDKKLIQGTGLTNRVRQEVEIHSRLKHPSVLQLYTFFQDANYVYLVLELAHNGELHRYMNHIARPFTETEAASILKQVVAGLLYLHSHNIMHRDISLSNLLLSKEMHVKIADFGLATQLKRPDERHMTMCGTPNYISPEVVSRSSHGLPADVWSVGCMLYTLLVGRPPFETDAVQSTLNKVVMSEYIMPAHLSYEAQDLINKLLKKLPHERITLEAVLCHPFMLKCSNGGHSTPGALNMFSQSMESADSGIITFASSESRNSQQIRSVENSGPQQMLPQIQEEFKHHKLTYEQPGLFRQTSTGLAEPNWPGAAKASAFHMEIGMVPTSKPAPVKEDRISVPPLNTKRLLSTRYKTKNAIMSILRNGEVVLEFLKFRPTYNEDRIIDICRISDDGQRIIIYQPDPGRGLPVREQPPDLQIPSGDCVYNYENLPSKHWKKYIYGARFVGLVKSKTPKVTYFSTLGKCQLMETMTDFEIRFYSGAKLLKTPTEGVKVYDRNGMFLSDHTCSESRSLIEHGNECFTHCININNALEVAQTKDNSCFPVTIGRRPVTDVQPAQRLDGLRDTTNIAFSTPKSNQGSINFSVSTISSTRNTTDFGNNCSRLNMLASHQNIPIKRINVPDVGIATELSHGVVQVQFYDGSVVSVIPSMQGGGITYTQPNGTSTHFGKDDDLPFPVRDRVGQIPNIQIKLKTAPLLESGRKIDYNNATPKTTTPSYNRMLL.

The Protein kinase domain maps to 14 to 267 (YEVQHLLGKG…LEAVLCHPFM (254 aa)). Residues 20 to 28 (LGKGGFAIV) and Lys-43 contribute to the ATP site. Asp-138 (proton acceptor) is an active-site residue. The region spanning 379-496 (EDRISVPPLN…ARFVGLVKSK (118 aa)) is the Cryptic POLO box 1 (CPB1) domain. The Cryptic POLO box 2 (CPB2) domain maps to 497 to 600 (TPKVTYFSTL…GRRPVTDVQP (104 aa)). The POLO box domain maps to 658 to 737 (PIKRINVPDV…IPNIQIKLKT (80 aa)).

It belongs to the protein kinase superfamily. Ser/Thr protein kinase family. CDC5/Polo subfamily. Homodimer. Ubiquitinated by the SCF(Slimb) ubiquitin ligase complex; leading to its degradation by the proteasome during interphase and regulating centriole number and ensuring the block to centriole reduplication.

It is found in the cytoplasm. It localises to the cytoskeleton. The protein resides in the microtubule organizing center. The protein localises to the centrosome. Its subcellular location is the centriole. The enzyme catalyses L-seryl-[protein] + ATP = O-phospho-L-seryl-[protein] + ADP + H(+). It catalyses the reaction L-threonyl-[protein] + ATP = O-phospho-L-threonyl-[protein] + ADP + H(+). Serine/threonine-protein kinase that plays a central role in centriole duplication. Able to trigger procentriole formation on the surface of the mother centriole cylinder, using mother centriole as a platform, leading to the recruitment of centriole biogenesis proteins such as sas-6. When overexpressed, it is able to induce centrosome amplification through the simultaneous generation of multiple procentrioles adjoining each parental centriole during S phase. Centrosome amplification following overexpression can initiate tumorigenesis, highlighting the importance of centrosome regulation in cancers. The sequence is that of Serine/threonine-protein kinase PLK4 (SAK) from Drosophila yakuba (Fruit fly).